We begin with the raw amino-acid sequence, 799 residues long: Protein translocase subunit SecA 1 (799 aa).

ATP is bound by residues glutamine 85, 103–107 (GEGKT), and aspartate 504.

The protein belongs to the SecA family. In terms of assembly, monomer and homodimer. Part of the essential Sec protein translocation apparatus which comprises SecA, SecYEG and auxiliary proteins SecDF. Other proteins may also be involved.

The protein resides in the cell membrane. The protein localises to the cytoplasm. It catalyses the reaction ATP + H2O + cellular proteinSide 1 = ADP + phosphate + cellular proteinSide 2.. Its function is as follows. Part of the Sec protein translocase complex. Interacts with the SecYEG preprotein conducting channel. Has a central role in coupling the hydrolysis of ATP to the transfer of proteins into and across the cell membrane, serving as an ATP-driven molecular motor driving the stepwise translocation of polypeptide chains across the membrane. The protein is Protein translocase subunit SecA 1 of Lactobacillus johnsonii (strain CNCM I-12250 / La1 / NCC 533).